We begin with the raw amino-acid sequence, 452 residues long: SAGA complex/transcription factor TFIID complex subunit Taf6 (452 aa).

In terms of domain architecture, Histone-fold spans 4-68 (TVWNIESIKD…TSADISSALR (65 aa)).

This sequence belongs to the TAF6 family. As to quaternary structure, component of the 1.8 MDa SAGA (Spt-Ada-Gcn5 acetyltransferase) complex, which is composed of 19 subunits tra1, spt7, taf5, ngg1/ada3, sgf73, spt20, spt8, taf12, taf6, hfi1/ada1, ubp8, gcn5, ada2, spt3, sgf29, taf10, taf9, sgf11 and sus1. The SAGA complex is composed of 4 modules, namely the HAT (histone acetyltransferase) module (gcn5, ada2, ngg1/ada3 and sgf29), the DUB (deubiquitinating) module (ubp8, sgf11, sgf73 and sus1), the core or TAF (TBP-associated factor) module (taf5, taf6, taf9, taf10 and taf12), and the Tra1 or SPT (Suppressor of Ty) module (tra1, hfi1/ada1, spt3, spt7, spt8 and spt20). The Tra1/SPT module binds activators, the core module recruits TBP (TATA-binding protein), the HAT module contains the histone H3 acetyltransferase gcn5, and the DUB module comprises the histone H2B deubiquitinase ubp8. Interacts with gcn5, taf5 and taf73. Component of the 1.2 MDa TFIID complex, which is composed of TATA-binding protein (TBP) and the 14 TBP-associated factors (TAFs). It comprises 1 copy of each taf1, taf2, taf3, taf7, taf8, taf11, taf13, 2 copies of each taf4, taf5, taf6, taf9, taf10, taf12, and 3 copies of taf14. In TFIID, taf6 heterodimerizes with taf9, forming ultimately an octamer consisting of a taf6-taf9 heterotetramer core flanked by taf4-taf12 dimers on either side, similar to the histone H2A-H2B-H3-H4 octamer.

The protein resides in the nucleus. In terms of biological role, functions as a component of both the DNA-binding general transcription initiation factor complex TFIID and the transcription coactivator SAGA complex. Binding of TFIID to a promoter (with or without TATA element) is the initial step in pre-initiation complex (PIC) formation. TFIID plays a key role in the regulation of gene expression by RNA polymerase II through different activities such as transcription activator interaction, core promoter recognition and selectivity, TFIIA and TFIIB interaction, chromatin modification (histone acetylation by TAF1), facilitation of DNA opening and initiation of transcription. SAGA acts as a general cofactor required for essentially all RNA polymerase II transcription. At the promoters, SAGA is required for transcription pre-initiation complex (PIC) recruitment. It influences RNA polymerase II transcriptional activity through different activities such as TBP interaction (via core/TAF module) and promoter selectivity, interaction with transcription activators (via Tra1/SPT module), and chromatin modification through histone acetylation (via HAT module) and deubiquitination (via DUB module). SAGA preferentially acetylates histones H3 (to form H3K9ac, H3K14ac, H3K18ac and H3K23ac) and H2B and deubiquitinates histone H2B. SAGA interacts with DNA via upstream activating sequences (UASs). This chain is SAGA complex/transcription factor TFIID complex subunit Taf6, found in Schizosaccharomyces pombe (strain 972 / ATCC 24843) (Fission yeast).